The sequence spans 246 residues: ATP synthase subunit a, chloroplastic (246 aa).

Transmembrane regions (helical) follow at residues 35-55 (AQVL…TFLA), 94-114 (IPFI…GALI), 132-152 (DINT…YAGL), 198-218 (LVVA…MMFL), and 219-239 (GLFT…AYIG).

Belongs to the ATPase A chain family. F-type ATPases have 2 components, CF(1) - the catalytic core - and CF(0) - the membrane proton channel. CF(1) has five subunits: alpha(3), beta(3), gamma(1), delta(1), epsilon(1). CF(0) has four main subunits: a, b, b' and c.

It localises to the plastid. It is found in the chloroplast thylakoid membrane. Its function is as follows. Key component of the proton channel; it plays a direct role in the translocation of protons across the membrane. This Chara vulgaris (Common stonewort) protein is ATP synthase subunit a, chloroplastic.